The following is a 522-amino-acid chain: Echinocystic acid 23-monooxygenase (522 aa).

Residues 4 to 24 (LPYIATSIACIVILRWALNMM) form a helical; Signal-anchor for type II membrane protein membrane-spanning segment. N-linked (GlcNAc...) asparagine glycosylation occurs at Asn190. Cys470 serves as a coordination point for heme.

Belongs to the cytochrome P450 family. The cofactor is heme. As to expression, mainly expressed in flowers and flower buds, to a lesser extent in young leaves and, at low levels, in old leaves, stems and roots.

It localises to the membrane. It functions in the pathway secondary metabolite biosynthesis; terpenoid biosynthesis. In terms of biological role, component of the oleanane-type triterpene saponins (e.g. saponarioside A and saponarioside B) biosynthetic pathway, leading to the production of natural products with detergent properties used as traditional sources of soap. An oxidoreductase that facilitates the oxidation of the methyl group to a carboxyl group at the C-23 position of echinocystic acid, resulting in the formation of quillaic acid (QA). This is Echinocystic acid 23-monooxygenase from Saponaria officinalis (Common soapwort).